The sequence spans 189 residues: MKSTAPSYLKHHFLIAMPQMADPNFAQTLIYLIEHGPEGAMGLIVNRPSGLSLADVLEQLRPDEPIPALCQSLPIFAGGPVQTDRGFVLHSAEQQFQATLMLGPLGMSTSQDVLFAIADGQGPQRHFVALGYAGWEAGQLEAELADNTWLSCPADPQILFDLPHDQRLQAAAASLGVDLRLLSTQVGHA.

It belongs to the UPF0301 (AlgH) family.

This Stutzerimonas stutzeri (strain A1501) (Pseudomonas stutzeri) protein is UPF0301 protein PST_3956.